The primary structure comprises 1001 residues: Open rectifier potassium channel protein 1 (1001 aa).

At 1 to 6 the chain is on the cytoplasmic side; the sequence is MSPNRW. Residues 7–27 form a helical membrane-spanning segment; sequence ILLLIFYISYLMFGAAIYYHI. A glycan (N-linked (GlcNAc...) asparagine) is linked at Asn-58. Positions 95–111 form an intramembrane region, pore-forming; that stretch reads AFFFAFTVCSTVGYGNI. Residues 120–140 form a helical membrane-spanning segment; the sequence is MIMIAYSVIGIPVNGILFAGL. At 141-170 the chain is on the cytoplasmic side; the sequence is GEYFGRTFEAIYRRYKKYKMSTDMHYVPPQ. Residues 171–191 traverse the membrane as a helical segment; the sequence is LGLITTVVIALIPGIALFLLL. Residues 208–224 constitute an intramembrane region (pore-forming); that stretch reads LYYSYVTTTTIGFGDYV. The chain crosses the membrane as a helical span at residues 244 to 264; the sequence is IFVIVWFIFSLGYLVMIMTFI. The Cytoplasmic segment spans residues 265 to 1001; sequence TRGLQSKKLA…TGSSGAPAEK (737 aa). Residues Ser-332, Ser-373, Ser-562, and Ser-565 each carry the phosphoserine modification. Residues 591–668 are disordered; that stretch reads SQSYLRNGRG…QAPSARRGSM (78 aa). Residues Ser-685, Ser-691, and Ser-715 each carry the phosphoserine modification. 2 disordered regions span residues 768–795 and 830–1001; these read GGAAGGGGISRGSRKQRKMGNAGLEPPQ and SPTG…PAEK. Positions 832–841 are enriched in low complexity; it reads TGGAATAPAA. The span at 855 to 873 shows a compositional bias: polar residues; it reads AANQSQITAGPSNAPTVQS. The span at 911-926 shows a compositional bias: low complexity; the sequence is RRLSLRPSPLARELSP. Polar residues predominate over residues 961-983; sequence RPSTSSTHSPLSRIVQISQAQRK. The segment covering 984 to 1001 has biased composition (low complexity); that stretch reads SSMPSAAATGSSGAPAEK.

Belongs to the two pore domain potassium channel (TC 1.A.1.8) family. In terms of tissue distribution, widespread expression in adult, strongest expression in muscle, brain and ovary. Also present at low levels in larva and embryo.

It is found in the membrane. Background potassium channel. Rectification is dependent on external potassium concentration. Acts as an outwardly rectifying channel but as external potassium levels increase, this is reversed. This is Open rectifier potassium channel protein 1 (Ork1) from Drosophila melanogaster (Fruit fly).